Consider the following 329-residue polypeptide: L-arabinose-binding periplasmic protein (329 aa).

The N-terminal stretch at Met-1–Ala-23 is a signal peptide.

The protein belongs to the bacterial solute-binding protein 2 family.

Its subcellular location is the periplasm. Functionally, involved in the high-affinity L-arabinose membrane transport system. Binds with high affinity to arabinose, but can also bind D-galactose (approximately 2-fold reduction) and D-fucose (approximately 40-fold reduction). The sequence is that of L-arabinose-binding periplasmic protein (araF) from Escherichia coli (strain K12).